Reading from the N-terminus, the 571-residue chain is DExH-box ATP-dependent RNA helicase DExH16, mitochondrial (571 aa).

A mitochondrion-targeting transit peptide spans 1–56; the sequence is MAYSVVRLRKVSALGISRVLQADKGSLWRFHFEPEFGDLLRLGVLTRNYRKNSGSP. Residues 83–212 enclose the Helicase ATP-binding domain; sequence IARKKKRKVI…HLCGDPAVVP (130 aa). 96–103 serves as a coordination point for ATP; it reads GPTNSGKT. The short motif at 176 to 179 is the DEIH box; degenerate element; it reads DEIQ. The Helicase C-terminal domain occupies 213–399; that stretch reads LVEDILKVTG…GLFPTFDLLS (187 aa).

The protein belongs to the DExH box helicase family. As to quaternary structure, homodimer; in free form. Component of the mitochondrial degradosome (mtEXO) complex which is a heteropentamer containing 2 copies of SUPV3L1 and 3 copies of PNPT1. Mg(2+) serves as cofactor. Requires Mn(2+) as cofactor. In terms of tissue distribution, weakly expressed.

The protein resides in the nucleus. It is found in the mitochondrion matrix. It localises to the mitochondrion nucleoid. It carries out the reaction ATP + H2O = ADP + phosphate + H(+). With respect to regulation, activated by the presence of mitochondrial RNA. Its function is as follows. Major helicase player in mitochondrial RNA metabolism. Component of the mitochondrial degradosome (mtEXO) complex, that degrades 3' overhang double-stranded RNA with a 3'-to-5' directionality in an ATP-dependent manner. ATPase and ATP-dependent multisubstrate helicase, able to unwind double-stranded (ds) DNA and RNA, and RNA/DNA heteroduplexes in the 5'-to-3' direction. Plays a role in the RNA surveillance system in mitochondria; regulates the stability of mature mRNAs, the removal of aberrantly formed mRNAs and the rapid degradation of non coding processing intermediates. Required during pollen development. In Arabidopsis thaliana (Mouse-ear cress), this protein is DExH-box ATP-dependent RNA helicase DExH16, mitochondrial.